A 469-amino-acid polypeptide reads, in one-letter code: 23S rRNA (uracil(1939)-C(5))-methyltransferase RlmD (469 aa).

The TRAM domain maps to 11 to 69; that stretch reads PKTSNQRLTVTVDKLDMNGVGVARWQNKPIFIAGVLPDEIVDVKVIEQKSKYARAKLIS. [4Fe-4S] cluster is bound by residues cysteine 82, cysteine 88, cysteine 91, and cysteine 178. Residues glutamine 300, phenylalanine 329, asparagine 334, glutamate 350, aspartate 377, and aspartate 399 each contribute to the S-adenosyl-L-methionine site. Cysteine 425 (nucleophile) is an active-site residue.

This sequence belongs to the class I-like SAM-binding methyltransferase superfamily. RNA M5U methyltransferase family. RlmD subfamily.

It carries out the reaction uridine(1939) in 23S rRNA + S-adenosyl-L-methionine = 5-methyluridine(1939) in 23S rRNA + S-adenosyl-L-homocysteine + H(+). In terms of biological role, catalyzes the formation of 5-methyl-uridine at position 1939 (m5U1939) in 23S rRNA. In Colwellia psychrerythraea (strain 34H / ATCC BAA-681) (Vibrio psychroerythus), this protein is 23S rRNA (uracil(1939)-C(5))-methyltransferase RlmD.